Consider the following 67-residue polypeptide: DNA-directed RNA polymerase subunit omega (67 aa).

This sequence belongs to the RNA polymerase subunit omega family. As to quaternary structure, the RNAP catalytic core consists of 2 alpha, 1 beta, 1 beta' and 1 omega subunit. When a sigma factor is associated with the core the holoenzyme is formed, which can initiate transcription.

The enzyme catalyses RNA(n) + a ribonucleoside 5'-triphosphate = RNA(n+1) + diphosphate. In terms of biological role, promotes RNA polymerase assembly. Latches the N- and C-terminal regions of the beta' subunit thereby facilitating its interaction with the beta and alpha subunits. This chain is DNA-directed RNA polymerase subunit omega, found in Burkholderia pseudomallei (strain 1106a).